The chain runs to 227 residues: MVITVDGPSGAGKGTLCYALAKKLGFSLLDSGAIYRVTALAALKTQEQGQSAVKLDDEFALAELARKLDIQFLPQNGEVQIFLDGENVSGQIRTQDVADAASKVAVFPAVRSALLQLQQDFAKQGKGLIADGRDMGTVVFPNAQVKLFLDASAEERAKRRYKQLQSKGIDGNFAQILAEIKERDFRDRNRLVAPLKPADDALLLDSTELSIEDVIAQALAYIESKTA.

G7 to T15 is a binding site for ATP.

Belongs to the cytidylate kinase family. Type 1 subfamily.

The protein resides in the cytoplasm. The catalysed reaction is CMP + ATP = CDP + ADP. The enzyme catalyses dCMP + ATP = dCDP + ADP. The chain is Cytidylate kinase from Actinobacillus succinogenes (strain ATCC 55618 / DSM 22257 / CCUG 43843 / 130Z).